Here is a 159-residue protein sequence, read N- to C-terminus: Dihydrofolate reductase (159 aa).

The DHFR domain maps to 2–157 (TLSILVAHDL…IPHTFLHLIR (156 aa)). Residue 6 to 8 (LVA) participates in substrate binding. NADP(+) contacts are provided by residues 7–8 (VA) and 15–20 (IGFENQ). Aspartate 28 is a binding site for substrate. 44–47 (GRKT) is an NADP(+) binding site. Arginine 58 contributes to the substrate binding site. NADP(+)-binding positions include 63 to 66 (LTSD) and 93 to 98 (FGGQIL). Threonine 112 is a substrate binding site.

This sequence belongs to the dihydrofolate reductase family.

The enzyme catalyses (6S)-5,6,7,8-tetrahydrofolate + NADP(+) = 7,8-dihydrofolate + NADPH + H(+). It participates in cofactor biosynthesis; tetrahydrofolate biosynthesis; 5,6,7,8-tetrahydrofolate from 7,8-dihydrofolate: step 1/1. Key enzyme in folate metabolism. Catalyzes an essential reaction for de novo glycine and purine synthesis, and for DNA precursor synthesis. The chain is Dihydrofolate reductase (folA) from Staphylococcus aureus (strain MW2).